Consider the following 343-residue polypeptide: N-acetyl-gamma-glutamyl-phosphate reductase (343 aa).

Residue Cys-149 is part of the active site.

This sequence belongs to the NAGSA dehydrogenase family. Type 1 subfamily.

The protein localises to the cytoplasm. It catalyses the reaction N-acetyl-L-glutamate 5-semialdehyde + phosphate + NADP(+) = N-acetyl-L-glutamyl 5-phosphate + NADPH + H(+). Its pathway is amino-acid biosynthesis; L-arginine biosynthesis; N(2)-acetyl-L-ornithine from L-glutamate: step 3/4. Its function is as follows. Catalyzes the NADPH-dependent reduction of N-acetyl-5-glutamyl phosphate to yield N-acetyl-L-glutamate 5-semialdehyde. The polypeptide is N-acetyl-gamma-glutamyl-phosphate reductase (Methanococcus maripaludis (strain C5 / ATCC BAA-1333)).